Here is a 517-residue protein sequence, read N- to C-terminus: Protein NETWORKED 4B (517 aa).

2 disordered regions span residues methionine 1–asparagine 29 and leucine 101–aspartate 159. Positions lysine 10–histidine 21 are enriched in basic residues. Residues histidine 21 to leucine 101 enclose the NAB domain. The span at serine 107 to serine 119 shows a compositional bias: low complexity. Residues threonine 121 to glutamate 135 show a composition bias toward basic and acidic residues. Positions glutamate 156–leucine 486 form a coiled coil.

This sequence belongs to the NET family.

Plant-specific actin binding protein. May be part of a membrane-cytoskeletal adapter complex. The chain is Protein NETWORKED 4B from Arabidopsis thaliana (Mouse-ear cress).